Reading from the N-terminus, the 341-residue chain is MITIDGSYGEGGGQILRTSVALSTITGEPVRIVNIRANRPNPGLRPQHLHAILALKHLANAEVKGAHVGSRELVFIPKKLEAKEISIDIGTAGSITLVLQALLPAMVFAREKVKFRITGGTDVSWSPPVDYLSNVTLFALEKIGIHGEIRVIRRGHYPKGGGIVEGYVEPWNEKRELVAKEYSRIIKIEGISHATNLPSHVAERQARAAKDELLQLKVPIEIRTEISRSIGPGSGIVVWAETDCLRLGGDALGKKGKPAEIVGKEAAQELLDQLKPGHCVDKFLGDQLIPFLAFSGGVIWVSEITNHLKTNIWVVESFLGRIFDVDGNVGEPGKIRVIRRV.

ATP is bound by residues glutamine 100 and 283 to 287 (FLGDQ). Catalysis depends on histidine 307, which acts as the Tele-AMP-histidine intermediate.

The protein belongs to the RNA 3'-terminal cyclase family. Type 1 subfamily.

Its subcellular location is the cytoplasm. It carries out the reaction a 3'-end 3'-phospho-ribonucleotide-RNA + ATP = a 3'-end 2',3'-cyclophospho-ribonucleotide-RNA + AMP + diphosphate. Functionally, catalyzes the conversion of 3'-phosphate to a 2',3'-cyclic phosphodiester at the end of RNA. The mechanism of action of the enzyme occurs in 3 steps: (A) adenylation of the enzyme by ATP; (B) transfer of adenylate to an RNA-N3'P to produce RNA-N3'PP5'A; (C) and attack of the adjacent 2'-hydroxyl on the 3'-phosphorus in the diester linkage to produce the cyclic end product. The biological role of this enzyme is unknown but it is likely to function in some aspects of cellular RNA processing. This chain is RNA 3'-terminal phosphate cyclase (rtcA), found in Pyrococcus horikoshii (strain ATCC 700860 / DSM 12428 / JCM 9974 / NBRC 100139 / OT-3).